The sequence spans 465 residues: Macrophage metalloelastase (465 aa).

The N-terminal stretch at 1 to 21 is a signal peptide; the sequence is MKFLLVLVLLVSLQVSACGAA. Residues 22 to 101 constitute a propeptide, activation peptide; the sequence is PMNESEFAEW…DVQHLRAVPQ (80 aa). The short motif at 86–93 is the Cysteine switch element; the sequence is SRCGVPDV. Cys-88 serves as a coordination point for Zn(2+). Positions 120 and 154 each coordinate Ca(2+). 2 residues coordinate Zn(2+): His-164 and Asp-166. Ca(2+) contacts are provided by Asp-171, Gly-172, Gly-174, and Thr-176. His-179 lines the Zn(2+) pocket. Residues Gly-186 and Asp-190 each coordinate Ca(2+). His-192 serves as a coordination point for Zn(2+). Ca(2+)-binding residues include Asp-194, Glu-195, and Glu-197. His-214 lines the Zn(2+) pocket. Glu-215 is a catalytic residue. Residues His-218 and His-224 each coordinate Zn(2+). A disulfide bridge connects residues Cys-278 and Cys-465. 4 Hemopexin repeats span residues 281-324, 325-371, 373-421, and 422-465; these read SLSF…WPTI, PSGI…GFPA, VKKI…FPGI, and RPKI…WFGC. Asp-285 contributes to the Ca(2+) binding site. N-linked (GlcNAc...) asparagine glycosylation is present at Asn-313. Ca(2+)-binding residues include Asp-377 and Asp-426.

Belongs to the peptidase M10A family. Requires Ca(2+) as cofactor. The cofactor is Zn(2+).

The protein resides in the secreted. Its subcellular location is the extracellular space. It localises to the extracellular matrix. The enzyme catalyses Hydrolysis of soluble and insoluble elastin. Specific cleavages are also produced at 14-Ala-|-Leu-15 and 16-Tyr-|-Leu-17 in the B chain of insulin.. In terms of biological role, may be involved in tissue injury and remodeling. Has significant elastolytic activity. Can accept large and small amino acids at the P1' site, but has a preference for leucine. Aromatic or hydrophobic residues are preferred at the P1 site, with small hydrophobic residues (preferably alanine) occupying P3. This chain is Macrophage metalloelastase (Mmp12), found in Rattus norvegicus (Rat).